Here is a 101-residue protein sequence, read N- to C-terminus: MFDQTTNTEVHQLTVGKIETANGTIKPQLLRDAVKRAVTNFFSQLDGQEASEVYEMVLSEVEAPLLDIIMQHTRGNQTRAANMLGINRGTLRKKLKKYGMN.

The H-T-H motif DNA-binding region spans Q77–K96.

Belongs to the transcriptional regulatory Fis family. As to quaternary structure, homodimer.

Functionally, activates ribosomal RNA transcription. Plays a direct role in upstream activation of rRNA promoters. The chain is DNA-binding protein Fis from Shewanella denitrificans (strain OS217 / ATCC BAA-1090 / DSM 15013).